Reading from the N-terminus, the 120-residue chain is NAD(P)H-quinone oxidoreductase subunit 3, chloroplastic (120 aa).

Transmembrane regions (helical) follow at residues 9-29 (IFWA…WISA), 64-84 (MFAL…PWAM), and 88-108 (VLGI…VVGL).

The protein belongs to the complex I subunit 3 family. As to quaternary structure, NDH is composed of at least 16 different subunits, 5 of which are encoded in the nucleus.

It is found in the plastid. The protein localises to the chloroplast thylakoid membrane. The catalysed reaction is a plastoquinone + NADH + (n+1) H(+)(in) = a plastoquinol + NAD(+) + n H(+)(out). It catalyses the reaction a plastoquinone + NADPH + (n+1) H(+)(in) = a plastoquinol + NADP(+) + n H(+)(out). Its function is as follows. NDH shuttles electrons from NAD(P)H:plastoquinone, via FMN and iron-sulfur (Fe-S) centers, to quinones in the photosynthetic chain and possibly in a chloroplast respiratory chain. The immediate electron acceptor for the enzyme in this species is believed to be plastoquinone. Couples the redox reaction to proton translocation, and thus conserves the redox energy in a proton gradient. The polypeptide is NAD(P)H-quinone oxidoreductase subunit 3, chloroplastic (Oryza nivara (Indian wild rice)).